The chain runs to 68 residues: Protein transport protein Sec61 subunit gamma (68 aa).

Met1 carries the post-translational modification N-acetylmethionine. At 1–32 (MDQVMQFVEPSRQFVKDSIRLVKRCTKPDRKE) the chain is on the cytoplasmic side. Ser18 is modified (phosphoserine). The helical transmembrane segment at 33–61 (FQKIAMATAIGFAIMGFIGFFVKLIHIPI) threads the bilayer. Topologically, residues 62–68 (NNIIVGG) are extracellular.

Belongs to the SecE/SEC61-gamma family. As to quaternary structure, the SEC61 channel-forming translocon complex consists of channel-forming core components SEC61A1, SEC61B and SEC61G and different auxiliary components such as SEC62 and SEC63. The SEC61 channel associates with the multi-pass translocon (MPT) complex.

Its subcellular location is the endoplasmic reticulum membrane. Its function is as follows. Component of SEC61 channel-forming translocon complex that mediates transport of signal peptide-containing precursor polypeptides across the endoplasmic reticulum (ER). Forms a ribosome receptor and a gated pore in the ER membrane, both functions required for cotranslational translocation of nascent polypeptides. The SEC61 channel is also involved in ER membrane insertion of transmembrane proteins: it mediates membrane insertion of the first few transmembrane segments of proteins, while insertion of subsequent transmembrane regions of multi-pass membrane proteins is mediated by the multi-pass translocon (MPT) complex. The SEC61 channel cooperates with the translocating protein TRAM1 to import nascent proteins into the ER. The polypeptide is Protein transport protein Sec61 subunit gamma (SEC61G) (Bos taurus (Bovine)).